We begin with the raw amino-acid sequence, 88 residues long: Co-chaperonin GroES (88 aa).

It belongs to the GroES chaperonin family. In terms of assembly, heptamer of 7 subunits arranged in a ring. Interacts with the chaperonin GroEL.

It is found in the cytoplasm. In terms of biological role, together with the chaperonin GroEL, plays an essential role in assisting protein folding. The GroEL-GroES system forms a nano-cage that allows encapsulation of the non-native substrate proteins and provides a physical environment optimized to promote and accelerate protein folding. GroES binds to the apical surface of the GroEL ring, thereby capping the opening of the GroEL channel. The protein is Co-chaperonin GroES of Treponema denticola (strain ATCC 35405 / DSM 14222 / CIP 103919 / JCM 8153 / KCTC 15104).